We begin with the raw amino-acid sequence, 129 residues long: Small ribosomal subunit protein uS13 (129 aa).

A compositionally biased stretch (basic residues) spans 95–114; it reads NLPVRGQRTKTNARTRRGPR. The interval 95–129 is disordered; sequence NLPVRGQRTKTNARTRRGPRKTVAGRGQKRGATKK.

Belongs to the universal ribosomal protein uS13 family. Part of the 30S ribosomal subunit. Forms a loose heterodimer with protein S19. Forms two bridges to the 50S subunit in the 70S ribosome.

In terms of biological role, located at the top of the head of the 30S subunit, it contacts several helices of the 16S rRNA. In the 70S ribosome it contacts the 23S rRNA (bridge B1a) and protein L5 of the 50S subunit (bridge B1b), connecting the 2 subunits; these bridges are implicated in subunit movement. Contacts the tRNAs in the A and P-sites. This is Small ribosomal subunit protein uS13 from Dehalococcoides mccartyi (strain ATCC BAA-2100 / JCM 16839 / KCTC 5957 / BAV1).